Consider the following 116-residue polypeptide: Aspartate 1-decarboxylase (116 aa).

The active-site Schiff-base intermediate with substrate; via pyruvic acid is the Ser25. Position 25 is a pyruvic acid (Ser) (Ser25). Thr57 is a binding site for substrate. The Proton donor role is filled by Tyr58. A substrate-binding site is contributed by 73–75 (GAA).

Belongs to the PanD family. Heterooctamer of four alpha and four beta subunits. It depends on pyruvate as a cofactor. Is synthesized initially as an inactive proenzyme, which is activated by self-cleavage at a specific serine bond to produce a beta-subunit with a hydroxyl group at its C-terminus and an alpha-subunit with a pyruvoyl group at its N-terminus.

It localises to the cytoplasm. The catalysed reaction is L-aspartate + H(+) = beta-alanine + CO2. The protein operates within cofactor biosynthesis; (R)-pantothenate biosynthesis; beta-alanine from L-aspartate: step 1/1. Its function is as follows. Catalyzes the pyruvoyl-dependent decarboxylation of aspartate to produce beta-alanine. The sequence is that of Aspartate 1-decarboxylase from Christiangramia forsetii (strain DSM 17595 / CGMCC 1.15422 / KT0803) (Gramella forsetii).